The chain runs to 86 residues: UPF0297 protein SSP1144 (86 aa).

Belongs to the UPF0297 family.

This chain is UPF0297 protein SSP1144, found in Staphylococcus saprophyticus subsp. saprophyticus (strain ATCC 15305 / DSM 20229 / NCIMB 8711 / NCTC 7292 / S-41).